We begin with the raw amino-acid sequence, 99 residues long: Large ribosomal subunit protein uL23 (99 aa).

The protein belongs to the universal ribosomal protein uL23 family. Part of the 50S ribosomal subunit. Contacts protein L29, and trigger factor when it is bound to the ribosome.

Its function is as follows. One of the early assembly proteins it binds 23S rRNA. One of the proteins that surrounds the polypeptide exit tunnel on the outside of the ribosome. Forms the main docking site for trigger factor binding to the ribosome. The chain is Large ribosomal subunit protein uL23 from Xanthomonas campestris pv. campestris (strain B100).